A 53-amino-acid polypeptide reads, in one-letter code: uncharacterized protein (53 aa).

The chain crosses the membrane as a helical span at residues 28-45; sequence AIVFSLAVFGIVEAYYYW.

The protein resides in the host membrane. This is an uncharacterized protein from Acidianus convivator (ABV).